The primary structure comprises 490 residues: MEICLFPATLQSWTGDVLMVGMFEGKMEERLNELETLCKGSLMQSLEKQMFKGKSGEIATVQLLQNKPNLLVLVGLGEPQEMRLDDLRKAAALGAKASLGCSGTLGMMLPWEPLDAASAARAVAEAVRLSLYKDLRFRSAPEPRSTPTKLELIGLPDSAGKDLQAVHPTCAGVELARQLVAAPANSLTPAALAQTAIQLAHEHGLECSVLERSDCAEREMGAYLAVSQGSDLEPKFIHLTYRPQGPVQRRLALVGKGLTFDSGGYNLKVGAAQIDLMKFDMGGSAAVLGAARAIAELRPKGVEVHVIVAACENMVNGSAVHPGDLVRASNGTTIEINNTDAEGRLTLADALVYTCGLEPDAIVDLATLTGACVIALGEEIAGLWTGHDPLAEGLTAAAEAAGEGLWRMPLPSSYREGLKSNLADLKNTGPRPGGSITAALFLKEFVEASIPWAHIDIAGTVWSEKGRGLNPSGATGYGVRTLVNWICSQS.

Lys-256 and Asp-261 together coordinate Mn(2+). Lys-268 is a catalytic residue. Positions 280, 340, and 342 each coordinate Mn(2+). Residue Arg-344 is part of the active site.

This sequence belongs to the peptidase M17 family. Mn(2+) is required as a cofactor.

Its subcellular location is the cytoplasm. It carries out the reaction Release of an N-terminal amino acid, Xaa-|-Yaa-, in which Xaa is preferably Leu, but may be other amino acids including Pro although not Arg or Lys, and Yaa may be Pro. Amino acid amides and methyl esters are also readily hydrolyzed, but rates on arylamides are exceedingly low.. It catalyses the reaction Release of an N-terminal amino acid, preferentially leucine, but not glutamic or aspartic acids.. Presumably involved in the processing and regular turnover of intracellular proteins. Catalyzes the removal of unsubstituted N-terminal amino acids from various peptides. In Prochlorococcus marinus (strain MIT 9313), this protein is Probable cytosol aminopeptidase.